We begin with the raw amino-acid sequence, 257 residues long: MLIIPAIDLKDGHCVRLKQGVMENVTVFSEDPAAMARHWLDQGARRLHLVDLNGAFAGKPKNELAIRDIVDAIGDEIPTQLGGGIRDLETIERYLDDGITYIIIGTAAVKTPGFLHDACNAFPGHIMVGLDAKDGKVAVNGWSKVTGHDVVDLAKKFEDYGVEAIIYTDIGRDGMLSGVNLKATLELARALTIPVIASGGVSSLDDVKALCEMEPEGIAGAITGRAIYEGTLDFKVAQELADELSTQSSPRDTTILF.

Residue Asp8 is the Proton acceptor of the active site. The active-site Proton donor is Asp131.

This sequence belongs to the HisA/HisF family.

Its subcellular location is the cytoplasm. It carries out the reaction 1-(5-phospho-beta-D-ribosyl)-5-[(5-phospho-beta-D-ribosylamino)methylideneamino]imidazole-4-carboxamide = 5-[(5-phospho-1-deoxy-D-ribulos-1-ylimino)methylamino]-1-(5-phospho-beta-D-ribosyl)imidazole-4-carboxamide. It participates in amino-acid biosynthesis; L-histidine biosynthesis; L-histidine from 5-phospho-alpha-D-ribose 1-diphosphate: step 4/9. This chain is 1-(5-phosphoribosyl)-5-[(5-phosphoribosylamino)methylideneamino] imidazole-4-carboxamide isomerase, found in Nitrosospira multiformis (strain ATCC 25196 / NCIMB 11849 / C 71).